Consider the following 551-residue polypeptide: Solute carrier family 22 member 6 (551 aa).

The Cytoplasmic portion of the chain corresponds to 1–23 (MAFNDLLKQVGGVGRFQRIQVTL). The helical transmembrane segment at 24-44 (VVLPLLLMASHNTLQNFTAAI) threads the bilayer. Residues 45–135 (PPHHCRPPAH…LVCSHRALRQ (91 aa)) lie on the Extracellular side of the membrane. 3 N-linked (GlcNAc...) asparagine glycosylation sites follow: asparagine 56, asparagine 92, and asparagine 113. Residues 136–156 (LGQSLYMAGVLIGAMVFGYLA) traverse the membrane as a helical segment. Topologically, residues 157–164 (DRLGRRKV) are cytoplasmic. The helical transmembrane segment at 165–187 (LILNYLQTAVSGTCAAFSPNFTV) threads the bilayer. Residues 188–195 (YCTFRLLS) lie on the Extracellular side of the membrane. Residues 196–216 (GMSLAGIALNCMTLNVEWMPI) form a helical membrane-spanning segment. Residues 217–224 (HTRAYVGT) lie on the Cytoplasmic side of the membrane. The chain crosses the membrane as a helical span at residues 225–245 (LAGYVYSTGQFLLAGVAYAVP). Residues 246-248 (HWR) are Extracellular-facing. Residues 249-269 (YLQLLVSVPFFAFFVYSWFFI) form a helical membrane-spanning segment. At 270–337 (ESARWYSTPG…ELLRCPALRH (68 aa)) the chain is on the cytoplasmic side. A helical membrane pass occupies residues 338-358 (LFLCLSLLWFATSFAYYGLVM). At 359 to 368 (DLQGFGVSIY) the chain is on the extracellular side. The helical transmembrane segment at 369 to 389 (LIQVIFGAVDLPAKLVCFLVI) threads the bilayer. At 390–395 (NSLGRR) the chain is on the cytoplasmic side. Residues 396–416 (PAQMASLLLAGICILVNGVIP) form a helical membrane-spanning segment. At 417–425 (RDQSIVRTS) the chain is on the extracellular side. The chain crosses the membrane as a helical span at residues 426-446 (LAVLGKGCLASSFNCIFLYTG). The Cytoplasmic segment spans residues 447–484 (ELYPTMIRQTGLGMGSTMARVGSIVSPLVSMTSELYPS). A helical membrane pass occupies residues 485 to 505 (LPLFIYGAVPVAASAATALLP). The Extracellular segment spans residues 506–551 (ETLGQPLPDTVQDLESRRRGKPRRQQQEQQKQMVPLQASVQEKNGL). The segment at 520-551 (ESRRRGKPRRQQQEQQKQMVPLQASVQEKNGL) is disordered.

This sequence belongs to the major facilitator (TC 2.A.1) superfamily. Organic cation transporter (TC 2.A.1.19) family. In terms of processing, glycosylated. Glycosylation is necessary for proper targeting of the transporter to the plasma membrane.

The protein localises to the basolateral cell membrane. It is found in the basal cell membrane. The catalysed reaction is (6R)-L-erythro-5,6,7,8-tetrahydrobiopterin(out) + a dicarboxylate(in) = (6R)-L-erythro-5,6,7,8-tetrahydrobiopterin(in) + a dicarboxylate(out). It catalyses the reaction L-erythro-7,8-dihydrobiopterin(out) + a dicarboxylate(in) = L-erythro-7,8-dihydrobiopterin(in) + a dicarboxylate(out). The enzyme catalyses L-sepiapterin(out) + a dicarboxylate(in) = L-sepiapterin(in) + a dicarboxylate(out). It carries out the reaction prostaglandin F2alpha(out) + a dicarboxylate(in) = prostaglandin F2alpha(in) + a dicarboxylate(out). The catalysed reaction is prostaglandin E2(out) + a dicarboxylate(in) = prostaglandin E2(in) + a dicarboxylate(out). It catalyses the reaction 3',5'-cyclic AMP(out) + a dicarboxylate(in) = 3',5'-cyclic AMP(in) + a dicarboxylate(out). The enzyme catalyses 3',5'-cyclic GMP(out) + a dicarboxylate(in) = 3',5'-cyclic GMP(in) + a dicarboxylate(out). It carries out the reaction urate(out) + a dicarboxylate(in) = urate(in) + a dicarboxylate(out). The catalysed reaction is kynurenate(out) + glutarate(in) = kynurenate(in) + glutarate(out). It catalyses the reaction (indol-3-yl)acetate(out) + a dicarboxylate(in) = (indol-3-yl)acetate(in) + a dicarboxylate(out). The enzyme catalyses indoxyl sulfate(out) + a dicarboxylate(in) = indoxyl sulfate(in) + a dicarboxylate(out). It carries out the reaction N-benzoylglycine(out) + a dicarboxylate(in) = N-benzoylglycine(in) + a dicarboxylate(out). The catalysed reaction is 3-carboxy-4-methyl-5-propyl-2-furanpropanoate(out) + a dicarboxylate(in) = 3-carboxy-4-methyl-5-propyl-2-furanpropanoate(in) + a dicarboxylate(out). Secondary active transporter that functions as a Na(+)-independent organic anion (OA)/dicarboxylate antiporter where the uptake of one molecule of OA into the cell is coupled with an efflux of one molecule of intracellular dicarboxylate such as 2-oxoglutarate or glutarate. Mediates the uptake of OA across the basolateral side of proximal tubule epithelial cells, thereby contributing to the renal elimination of endogenous OA from the systemic circulation into the urine. Functions as a biopterin transporters involved in the uptake and the secretion of coenzymes tetrahydrobiopterin (BH4), dihydrobiopterin (BH2) and sepiapterin to urine, thereby determining baseline levels of blood biopterins. Transports prostaglandin E2 (PGE2) and prostaglandin F2-alpha (PGF2-alpha) and may contribute to their renal excretion. Also mediates the uptake of cyclic nucleotides such as cAMP and cGMP. Involved in the transport of neuroactive tryptophan metabolites kynurenate (KYNA) and xanthurenate (XA) and may contribute to their secretion from the brain. May transport glutamate. Also involved in the disposition of uremic toxins and potentially toxic xenobiotics by the renal organic anion secretory pathway, helping reduce their undesired toxicological effects on the body. Uremic toxins include the indoxyl sulfate (IS), hippurate/N-benzoylglycine (HA), indole acetate (IA), 3-carboxy-4- methyl-5-propyl-2-furanpropionate (CMPF) and urate. Xenobiotics include the mycotoxin ochratoxin (OTA). May also contribute to the transport of organic compounds in testes across the blood-testis-barrier. May also work as a bidirectional OA/dicarboxylate exchanger. In Oryctolagus cuniculus (Rabbit), this protein is Solute carrier family 22 member 6.